We begin with the raw amino-acid sequence, 425 residues long: Ribosomal protein uS12 methylthiotransferase RimO (425 aa).

The MTTase N-terminal domain maps to 2–115 (KNFTVITLGC…IIDYIKQFSK (114 aa)). Residues Cys-11, Cys-47, Cys-78, Cys-142, Cys-146, and Cys-149 each coordinate [4Fe-4S] cluster. One can recognise a Radical SAM core domain in the interval 128–357 (VEPPSYRYIK…MARQAVISLE (230 aa)). In terms of domain architecture, TRAM spans 360-425 (RALIGKKYEA…YEYDVKGVIV (66 aa)).

The protein belongs to the methylthiotransferase family. RimO subfamily. Requires [4Fe-4S] cluster as cofactor.

It is found in the cytoplasm. The catalysed reaction is L-aspartate(89)-[ribosomal protein uS12]-hydrogen + (sulfur carrier)-SH + AH2 + 2 S-adenosyl-L-methionine = 3-methylsulfanyl-L-aspartate(89)-[ribosomal protein uS12]-hydrogen + (sulfur carrier)-H + 5'-deoxyadenosine + L-methionine + A + S-adenosyl-L-homocysteine + 2 H(+). Functionally, catalyzes the methylthiolation of an aspartic acid residue of ribosomal protein uS12. The chain is Ribosomal protein uS12 methylthiotransferase RimO from Thermodesulfovibrio yellowstonii (strain ATCC 51303 / DSM 11347 / YP87).